Here is a 258-residue protein sequence, read N- to C-terminus: Phosphate import ATP-binding protein PstB (258 aa).

The 242-residue stretch at 12-253 (IQVHNLNFYY…PKMKQTEDYI (242 aa)) folds into the ABC transporter domain. 44–51 (GPSGCGKS) is an ATP binding site.

This sequence belongs to the ABC transporter superfamily. Phosphate importer (TC 3.A.1.7) family. In terms of assembly, the complex is composed of two ATP-binding proteins (PstB), two transmembrane proteins (PstC and PstA) and a solute-binding protein (PstS).

Its subcellular location is the cell inner membrane. The catalysed reaction is phosphate(out) + ATP + H2O = ADP + 2 phosphate(in) + H(+). In terms of biological role, part of the ABC transporter complex PstSACB involved in phosphate import. Responsible for energy coupling to the transport system. This Photorhabdus laumondii subsp. laumondii (strain DSM 15139 / CIP 105565 / TT01) (Photorhabdus luminescens subsp. laumondii) protein is Phosphate import ATP-binding protein PstB.